Reading from the N-terminus, the 137-residue chain is Nucleoside diphosphate kinase (137 aa).

The ATP site is built by Lys9, Phe57, Arg85, Thr91, Arg102, and Asn112. His115 serves as the catalytic Pros-phosphohistidine intermediate.

It belongs to the NDK family. Homotetramer. It depends on Mg(2+) as a cofactor.

It localises to the cytoplasm. The catalysed reaction is a 2'-deoxyribonucleoside 5'-diphosphate + ATP = a 2'-deoxyribonucleoside 5'-triphosphate + ADP. It carries out the reaction a ribonucleoside 5'-diphosphate + ATP = a ribonucleoside 5'-triphosphate + ADP. In terms of biological role, major role in the synthesis of nucleoside triphosphates other than ATP. The ATP gamma phosphate is transferred to the NDP beta phosphate via a ping-pong mechanism, using a phosphorylated active-site intermediate. In Sulfurovum sp. (strain NBC37-1), this protein is Nucleoside diphosphate kinase.